Here is a 367-residue protein sequence, read N- to C-terminus: Probable glutamine synthetase (367 aa).

Residues 30–110 (IQATYVWIDG…VMCDTLDHQM (81 aa)) form the GS beta-grasp domain. Positions 117 to 367 (HRQACAEIMH…TAMIAQSILF (251 aa)) constitute a GS catalytic domain.

It belongs to the glutamine synthetase family. In terms of assembly, homooctamer.

The protein localises to the cytoplasm. The enzyme catalyses L-glutamate + NH4(+) + ATP = L-glutamine + ADP + phosphate + H(+). The chain is Probable glutamine synthetase (gln-2) from Caenorhabditis elegans.